Reading from the N-terminus, the 408-residue chain is Phosphoglycerate kinase (408 aa).

Substrate-binding positions include 24–26, Arg-40, 63–66, Arg-122, and Arg-166; these read DLN and HLGR. ATP-binding positions include Lys-216, Gly-304, Glu-335, and 364–367; that span reads GGDS.

The protein belongs to the phosphoglycerate kinase family. Monomer.

The protein resides in the cytoplasm. It carries out the reaction (2R)-3-phosphoglycerate + ATP = (2R)-3-phospho-glyceroyl phosphate + ADP. Its pathway is carbohydrate degradation; glycolysis; pyruvate from D-glyceraldehyde 3-phosphate: step 2/5. The polypeptide is Phosphoglycerate kinase (Mycolicibacterium smegmatis (strain ATCC 700084 / mc(2)155) (Mycobacterium smegmatis)).